Consider the following 55-residue polypeptide: Trypsin inhibitor (55 aa).

The region spanning 1–55 (AHMDCTEFNPLCRCNKMLGDLICAVIGDAKEEHRNMCALCCEHPGGFEYSNGPCE) is the Kazal-like domain. Cystine bridges form between Cys5-Cys40, Cys12-Cys41, Cys14-Cys37, and Cys23-Cys54.

The protein localises to the secreted. Functionally, potent inhibitor of trypsin. The chain is Trypsin inhibitor from Halocynthia roretzi (Sea squirt).